The chain runs to 595 residues: Actin-histidine N-methyltransferase (595 aa).

The tract at residues 1-22 is disordered; it reads MGKKSRVKTQKSGTGATATVSP. The span at 10 to 20 shows a compositional bias: polar residues; sequence QKSGTGATATV. S-adenosyl-L-methionine is bound by residues Arg-75, 104–106, Arg-254, 275–279, and 325–327; these read EGF, DMCNH, and SGF. The SET domain maps to 94-314; sequence EGFEMVNFKE…AGEQIYIFYG (221 aa). Position 513 is a phosphoserine (Ser-513). A compositionally biased stretch (polar residues) spans 549 to 573; sequence ENGLVNGENSIPNGTRSENENLNQE. The interval 549–595 is disordered; sequence ENGLVNGENSIPNGTRSENENLNQEGSKRAVEDAKGSSSDSTDEVKE. A compositionally biased stretch (basic and acidic residues) spans 574–583; the sequence is GSKRAVEDAK.

It belongs to the class V-like SAM-binding methyltransferase superfamily. SETD3 actin-histidine methyltransferase family. Interacts with MYOD1. Phosphorylated by GSK3B, which is required for recognition by the SCF(FBXW7) complex and subsequent degradation. In terms of processing, ubiquitinated by the SCF(FBXW7) complex following phosphorylation by GSK3B, leading to its degradation by the proteasome.

Its subcellular location is the cytoplasm. The protein localises to the nucleus. The catalysed reaction is L-histidyl-[protein] + S-adenosyl-L-methionine = N(tele)-methyl-L-histidyl-[protein] + S-adenosyl-L-homocysteine + H(+). In terms of biological role, protein-histidine N-methyltransferase that specifically mediates 3-methylhistidine (tele-methylhistidine) methylation of actin at 'His-73'. Histidine methylation of actin is required for smooth muscle contraction of the laboring uterus during delivery. Does not have protein-lysine N-methyltransferase activity and probably only catalyzes histidine methylation of actin. This chain is Actin-histidine N-methyltransferase, found in Plecturocebus moloch (Dusky titi monkey).